We begin with the raw amino-acid sequence, 948 residues long: MNSYAILLSLFFSFERLLTLANANSLYSPFNNSSFVDSDTSFSDLSRNGLLSLLDSNTTSASVQTIAISQTDNAASCIPSASLLSSSVVLYSAKETVTVSSYWSLVSTSVTGTVYVPYTSSVACFPYATSDAPNPIPRGDSATSTSIAPTYSASDSSATTITSSSPSTSIIGTGSTDTSVSSTLTYHTPIASPTTSSNSDNEYTVDVITSSSLSSFVITNVDSTTTSVINYIGASTLESSSLTNTVSPTESTFYETKSSTSSVPTQTIDSSSFTSSTPVSLTSSSTSSSGSSQDSTTIDSTPSTIATSTLQPTTSSPITTSAPSLSSALPTTYPSSLSTEVEVEYFTKTITDTSSIVTYSTGVETLYETETITSSEISSIIYNFSTPISGSSFPDGFKPINPTSFPSLTSSTKKIPSTTLPTSSKMITTTTPSVSNNTQSSFLIISTFTSSYEHSEPFKVSSVPLTSNNFSSISHSSASSLPITPSSYLSNTTLHSSVQSSQSSQFTVSVPSSTQSYSTSSNFTTPITISTSLSSFPTTIVSSSFQYSSLSSNVTTTNAQSSSLSSSNSSALTHISSSIVSSGSSSALSSSTIVSSINSSSSVFISSVSSSLQYSSSYVTETTTSGSVGFTTTIATPVGSTAGTVVVDIPTPSWVTETVTSGSVGFTTTIATPVGSTAGTVLVDIPTPSWVTETVTSGSVEFTTTIATPVGTTAGTVVVDIPTPSWVTETVTSGSVGFTTTIATPIGTTAGTVLVDIPTPSWVTETVTSGSVGFTTTIATPVGTTAGTVLIDVPTPTASSSPFPSCNTQCTNENSFRIQVINDDIYPSYVHLDSNNYAIAAARGDSDGENVFIYDSDIKRIVSCCGVKPIYRLDQDDTEGYSFEIYKDNDGQLQFKYPLNDALYPMELLTLTDGRIGITTNLTLYKPYYLNNVENERAANVVLRALEY.

Positions 1–23 (MNSYAILLSLFFSFERLLTLANA) are cleaved as a signal peptide. N-linked (GlcNAc...) asparagine glycans are attached at residues N31, N32, and N57. Disordered stretches follow at residues 136-174 (IPRGDSATSTSIAPTYSASDSSATTITSSSPSTSIIGTG) and 253-333 (FYET…PTTY). Residues 149–174 (PTYSASDSSATTITSSSPSTSIIGTG) are compositionally biased toward low complexity. The segment covering 253-264 (FYETKSSTSSVP) has biased composition (polar residues). Over residues 265–332 (TQTIDSSSFT…PSLSSALPTT (68 aa)) the composition is skewed to low complexity. N-linked (GlcNAc...) asparagine glycosylation occurs at N383. Positions 408 to 432 (LTSSTKKIPSTTLPTSSKMITTTTP) are disordered. Residues N436, N469, N491, N522, N553, N568, and N598 are each glycosylated (N-linked (GlcNAc...) asparagine). 5 consecutive repeat copies span residues 617–652 (SYVTETTTSGSVGFTTTIATPVGSTAGTVVVDIPTP), 653–688 (SWVTETVTSGSVGFTTTIATPVGSTAGTVLVDIPTP), 689–724 (SWVTETVTSGSVEFTTTIATPVGTTAGTVVVDIPTP), 725–760 (SWVTETVTSGSVGFTTTIATPIGTTAGTVLVDIPTP), and 761–796 (SWVTETVTSGSVGFTTTIATPVGTTAGTVLIDVPTP). The segment at 617–796 (SYVTETTTSG…GTVLIDVPTP (180 aa)) is 5 X 36 AA approximate tandem repeats. The DIPSY domain maps to 796 to 948 (PTASSSPFPS…ANVVLRALEY (153 aa)). N921 carries an N-linked (GlcNAc...) asparagine glycan.

This sequence belongs to the mam3/map4 family.

It is found in the cell surface. In terms of biological role, p cell-type specific protein which involved in agglutination during conjugation. The protein is P cell-type agglutination protein map4 of Schizosaccharomyces pombe (strain 972 / ATCC 24843) (Fission yeast).